The chain runs to 222 residues: Deoxyribose-phosphate aldolase (222 aa).

Aspartate 90 functions as the Proton donor/acceptor in the catalytic mechanism. Residue lysine 152 is the Schiff-base intermediate with acetaldehyde of the active site. The active-site Proton donor/acceptor is the lysine 181.

The protein belongs to the DeoC/FbaB aldolase family. DeoC type 1 subfamily.

It is found in the cytoplasm. The catalysed reaction is 2-deoxy-D-ribose 5-phosphate = D-glyceraldehyde 3-phosphate + acetaldehyde. It functions in the pathway carbohydrate degradation; 2-deoxy-D-ribose 1-phosphate degradation; D-glyceraldehyde 3-phosphate and acetaldehyde from 2-deoxy-alpha-D-ribose 1-phosphate: step 2/2. Catalyzes a reversible aldol reaction between acetaldehyde and D-glyceraldehyde 3-phosphate to generate 2-deoxy-D-ribose 5-phosphate. This is Deoxyribose-phosphate aldolase from Pectobacterium carotovorum subsp. carotovorum (strain PC1).